Here is a 188-residue protein sequence, read N- to C-terminus: Pyridoxal 5'-phosphate synthase subunit PdxT (188 aa).

46-48 (GES) provides a ligand contact to L-glutamine. Cys-78 acts as the Nucleophile in catalysis. L-glutamine is bound by residues Arg-106 and 132-133 (IR). Catalysis depends on charge relay system residues His-169 and Glu-171.

The protein belongs to the glutaminase PdxT/SNO family. In terms of assembly, in the presence of PdxS, forms a dodecamer of heterodimers. Only shows activity in the heterodimer.

It carries out the reaction aldehydo-D-ribose 5-phosphate + D-glyceraldehyde 3-phosphate + L-glutamine = pyridoxal 5'-phosphate + L-glutamate + phosphate + 3 H2O + H(+). The enzyme catalyses L-glutamine + H2O = L-glutamate + NH4(+). Its pathway is cofactor biosynthesis; pyridoxal 5'-phosphate biosynthesis. Catalyzes the hydrolysis of glutamine to glutamate and ammonia as part of the biosynthesis of pyridoxal 5'-phosphate. The resulting ammonia molecule is channeled to the active site of PdxS. This Tropheryma whipplei (strain Twist) (Whipple's bacillus) protein is Pyridoxal 5'-phosphate synthase subunit PdxT.